The sequence spans 264 residues: 3-methyl-2-oxobutanoate hydroxymethyltransferase (264 aa).

Residues D45 and D84 each coordinate Mg(2+). Residues 45–46, D84, and K112 each bind 3-methyl-2-oxobutanoate; that span reads DS. E114 contacts Mg(2+). Catalysis depends on E181, which acts as the Proton acceptor.

The protein belongs to the PanB family. As to quaternary structure, homodecamer; pentamer of dimers. Requires Mg(2+) as cofactor.

The protein localises to the cytoplasm. The enzyme catalyses 3-methyl-2-oxobutanoate + (6R)-5,10-methylene-5,6,7,8-tetrahydrofolate + H2O = 2-dehydropantoate + (6S)-5,6,7,8-tetrahydrofolate. It participates in cofactor biosynthesis; (R)-pantothenate biosynthesis; (R)-pantoate from 3-methyl-2-oxobutanoate: step 1/2. In terms of biological role, catalyzes the reversible reaction in which hydroxymethyl group from 5,10-methylenetetrahydrofolate is transferred onto alpha-ketoisovalerate to form ketopantoate. The protein is 3-methyl-2-oxobutanoate hydroxymethyltransferase of Shigella sonnei (strain Ss046).